The following is a 72-amino-acid chain: ATP-dependent Clp protease ATP-binding subunit ClpA homolog (72 aa).

The protein belongs to the ClpA/ClpB family.

It is found in the plastid. It localises to the chloroplast. May interact with a ClpP-like protease involved in degradation of denatured proteins in the chloroplast. This chain is ATP-dependent Clp protease ATP-binding subunit ClpA homolog, found in Populus euphratica (Euphrates poplar).